The primary structure comprises 311 residues: Methionyl-tRNA formyltransferase (311 aa).

Serine 112–proline 115 provides a ligand contact to (6S)-5,6,7,8-tetrahydrofolate.

Belongs to the Fmt family.

It catalyses the reaction L-methionyl-tRNA(fMet) + (6R)-10-formyltetrahydrofolate = N-formyl-L-methionyl-tRNA(fMet) + (6S)-5,6,7,8-tetrahydrofolate + H(+). Its function is as follows. Attaches a formyl group to the free amino group of methionyl-tRNA(fMet). The formyl group appears to play a dual role in the initiator identity of N-formylmethionyl-tRNA by promoting its recognition by IF2 and preventing the misappropriation of this tRNA by the elongation apparatus. This Sinorhizobium medicae (strain WSM419) (Ensifer medicae) protein is Methionyl-tRNA formyltransferase.